We begin with the raw amino-acid sequence, 92 residues long: Small ribosomal subunit protein uS19c (92 aa).

This sequence belongs to the universal ribosomal protein uS19 family.

It is found in the plastid. The protein localises to the chloroplast. In terms of biological role, protein S19 forms a complex with S13 that binds strongly to the 16S ribosomal RNA. This Ostreococcus tauri protein is Small ribosomal subunit protein uS19c.